The following is a 365-amino-acid chain: Endophilin-B1 (365 aa).

At M1 the chain carries N-acetylmethionine. The segment at 1 to 30 (MNIMDFNVKKLAADAGTFLSRAVQFTEEKL) is membrane-binding amphipathic helix. The segment at 1–37 (MNIMDFNVKKLAADAGTFLSRAVQFTEEKLGQAEKTE) is required for membrane binding. A BAR domain is found at 27-261 (EEKLGQAEKT…LGSFPSNYLS (235 aa)). At T145 the chain carries Phosphothreonine; by CDK5. Residues 155-186 (YKTIAKERKLLQNKRLDLDAAKTRLKKAKAAE) adopt a coiled-coil conformation. The SH3 domain maps to 305–365 (SNNRKARVLY…VPITYLELLN (61 aa)).

The protein belongs to the endophilin family. Homodimer, and heterodimer with SH3GLB2. Binds BAX; induction of apoptosis augments BAX binding. Binds DNM1, HTT, AMPH, BIN1 and ARFGAP1. Interacts with UVRAG; UVRAG bridges the interaction to BECN1 indicative for an association with the PI3K complex II (PI3KC3-C2). Isoform 3 interacts with PPP1CC; this interaction leads to the inhibition of phosphatase activity. Phosphorylated at Thr-145 by CDK5; this phosphorylation is required for autophagy induction in starved neurons and facilitates homodimerization. In terms of tissue distribution, isoform 1 is widely expressed. Isoform 2 is brain-specific. Isoform 3 is predominantly expressed in testis, but it is also detected in liver and, at much lower levels, in skin, stomach and ovary.

It is found in the cytoplasm. The protein resides in the golgi apparatus membrane. The protein localises to the mitochondrion outer membrane. It localises to the cytoplasmic vesicle. Its subcellular location is the autophagosome membrane. It is found in the midbody. May be required for normal outer mitochondrial membrane dynamics. Required for coatomer-mediated retrograde transport in certain cells. May recruit other proteins to membranes with high curvature. May promote membrane fusion. Involved in activation of caspase-dependent apoptosis by promoting BAX/BAK1 activation. Isoform 1 acts proapoptotic in fibroblasts. Involved in caspase-independent apoptosis during nutrition starvation and involved in the regulation of autophagy. Activates lipid kinase activity of PIK3C3 during autophagy probably by associating with the PI3K complex II (PI3KC3-C2). Associated with PI3KC3-C2 during autophagy may regulate the trafficking of ATG9A from the Golgi complex to the peripheral cytoplasm for the formation of autophagosomes by inducing Golgi membrane tubulation and fragmentation. Involved in regulation of degradative endocytic trafficking and cytokinesis, probably in the context of PI3KC3-C2. Isoform 2 acts antiapoptotic in neuronal cells; involved in maintenance of mitochondrial morphology and promotes neuronal viability. This chain is Endophilin-B1 (Sh3glb1), found in Mus musculus (Mouse).